A 124-amino-acid chain; its full sequence is Histone H2B 1/2 (124 aa).

The segment at 1-32 (MPEPAKAAPKKGSKKAVTKTAGKGGKKRKRTR) is disordered. N6-acetyllysine occurs at positions 6 and 11. The segment covering 8-17 (APKKGSKKAV) has biased composition (basic residues). The residue at position 13 (Ser-13) is a Phosphoserine. Residues Lys-14 and Lys-19 each carry the N6-acetyllysine modification. Ser-111 is a glycosylation site (O-linked (GlcNAc) serine). A Glycyl lysine isopeptide (Lys-Gly) (interchain with G-Cter in ubiquitin) cross-link involves residue Lys-119.

Belongs to the histone H2B family. In terms of assembly, the nucleosome is a histone octamer containing two molecules each of H2A, H2B, H3 and H4 assembled in one H3-H4 heterotetramer and two H2A-H2B heterodimers. The octamer wraps approximately 147 bp of DNA. Monoubiquitination of Lys-119 by the BRE1 gives a specific tag for epigenetic transcriptional activation and is also prerequisite for histone H3 'Lys-4' and 'Lys-79' methylation. In terms of processing, phosphorylated during apoptosis; which facilitates apoptotic chromatin condensation. Post-translationally, glcNAcylation at Ser-111 promotes monoubiquitination of Lys-119. It fluctuates in response to extracellular glucose, and associates with transcribed genes.

The protein localises to the nucleus. It localises to the chromosome. Its function is as follows. Core component of nucleosome. Nucleosomes wrap and compact DNA into chromatin, limiting DNA accessibility to the cellular machineries which require DNA as a template. Histones thereby play a central role in transcription regulation, DNA repair, DNA replication and chromosomal stability. DNA accessibility is regulated via a complex set of post-translational modifications of histones, also called histone code, and nucleosome remodeling. The polypeptide is Histone H2B 1/2 (Danio rerio (Zebrafish)).